The sequence spans 135 residues: ATP synthase epsilon chain, chloroplastic (135 aa).

This sequence belongs to the ATPase epsilon chain family. F-type ATPases have 2 components, CF(1) - the catalytic core - and CF(0) - the membrane proton channel. CF(1) has five subunits: alpha(3), beta(3), gamma(1), delta(1), epsilon(1). CF(0) has three main subunits: a, b and c.

Its subcellular location is the plastid. The protein localises to the chloroplast thylakoid membrane. In terms of biological role, produces ATP from ADP in the presence of a proton gradient across the membrane. The protein is ATP synthase epsilon chain, chloroplastic of Stigeoclonium helveticum (Green alga).